A 152-amino-acid chain; its full sequence is Troponin C (152 aa).

Position 1 is an N-acetylthreonine (Thr1). 4 consecutive EF-hand domains span residues 9–44 (KQIL…LGLL), 45–80 (VKDD…KLKE), 82–117 (LDER…LGDE), and 118–152 (LTEE…SSDA). Ca(2+) is bound by residues Asp131, Asp133, Ser135, Thr137, and Glu142.

The protein belongs to the troponin C family.

Functionally, troponin is the central regulatory protein of striated muscle contraction. Tn consists of three components: Tn-I which is the inhibitor of actomyosin ATPase, Tn-T which contains the binding site for tropomyosin and Tn-C. The binding of calcium to Tn-C abolishes the inhibitory action of Tn on actin filaments. This chain is Troponin C, found in Mizuhopecten yessoensis (Japanese scallop).